A 334-amino-acid chain; its full sequence is Probable tRNA pseudouridine synthase B (334 aa).

Catalysis depends on aspartate 82, which acts as the Nucleophile. The PUA domain maps to 250–325; it reads LPKIWIKDSA…IAVDVEKVFM (76 aa).

The protein belongs to the pseudouridine synthase TruB family. Type 2 subfamily.

The enzyme catalyses uridine(55) in tRNA = pseudouridine(55) in tRNA. Could be responsible for synthesis of pseudouridine from uracil-55 in the psi GC loop of transfer RNAs. In Pyrococcus abyssi (strain GE5 / Orsay), this protein is Probable tRNA pseudouridine synthase B.